An 82-amino-acid chain; its full sequence is MANSNNKTNAQQVRKQNQQSASGQGQFGTEFASETNVQQVRKQNQQSAAGQGQFGTEFASETDAQQVRQQNQSAEQNKQQNS.

Polar residues-rich tracts occupy residues 1–24 and 32–50; these read MANSNNKTNAQQVRKQNQQSASGQ and ASETNVQQVRKQNQQSAAG. Residues 1–82 are disordered; sequence MANSNNKTNA…SAEQNKQQNS (82 aa). 2 repeats span residues 19 to 45 and 46 to 72; these read QSASGQGQFGTEFASETNVQQVRKQNQ and QSAAGQGQFGTEFASETDAQQVRQQNQ. The span at 69–82 shows a compositional bias: low complexity; it reads QQNQSAEQNKQQNS.

This sequence belongs to the gamma-type SASP family.

In terms of biological role, SASP are bound to spore DNA. They are double-stranded DNA-binding proteins that cause DNA to change to an a-like conformation. They protect the DNA backbone from chemical and enzymatic cleavage and are thus involved in dormant spore's high resistance to UV light. The polypeptide is Small, acid-soluble spore protein gamma-type (Bacillus subtilis).